The primary structure comprises 58 residues: Large ribosomal subunit protein uL30 (58 aa).

The protein belongs to the universal ribosomal protein uL30 family. Part of the 50S ribosomal subunit.

This is Large ribosomal subunit protein uL30 from Bacteroides thetaiotaomicron (strain ATCC 29148 / DSM 2079 / JCM 5827 / CCUG 10774 / NCTC 10582 / VPI-5482 / E50).